Here is a 233-residue protein sequence, read N- to C-terminus: 5'-methylthioadenosine/S-adenosylhomocysteine nucleosidase (233 aa).

The active-site Proton acceptor is the Glu-12. Substrate is bound by residues Gly-78, Ile-152, and Met-173 to Glu-174. Asp-197 functions as the Proton donor in the catalytic mechanism.

This sequence belongs to the PNP/UDP phosphorylase family. MtnN subfamily. In terms of assembly, homodimer.

The catalysed reaction is S-adenosyl-L-homocysteine + H2O = S-(5-deoxy-D-ribos-5-yl)-L-homocysteine + adenine. The enzyme catalyses S-methyl-5'-thioadenosine + H2O = 5-(methylsulfanyl)-D-ribose + adenine. It carries out the reaction 5'-deoxyadenosine + H2O = 5-deoxy-D-ribose + adenine. It participates in amino-acid biosynthesis; L-methionine biosynthesis via salvage pathway; S-methyl-5-thio-alpha-D-ribose 1-phosphate from S-methyl-5'-thioadenosine (hydrolase route): step 1/2. Functionally, catalyzes the irreversible cleavage of the glycosidic bond in both 5'-methylthioadenosine (MTA) and S-adenosylhomocysteine (SAH/AdoHcy) to adenine and the corresponding thioribose, 5'-methylthioribose and S-ribosylhomocysteine, respectively. Also cleaves 5'-deoxyadenosine, a toxic by-product of radical S-adenosylmethionine (SAM) enzymes, into 5-deoxyribose and adenine. Thus, is required for in vivo function of the radical SAM enzymes biotin synthase and lipoic acid synthase, that are inhibited by 5'-deoxyadenosine accumulation. The polypeptide is 5'-methylthioadenosine/S-adenosylhomocysteine nucleosidase (Yersinia pestis bv. Antiqua (strain Angola)).